We begin with the raw amino-acid sequence, 219 residues long: Dehydration-responsive element-binding protein 1F (219 aa).

Residues 1–45 form a disordered region; sequence MDTEDTSSASSSSVSPPSSPGGGHHHRLPPKRRAGRKKFRETRHP. Residues 7-16 are compositionally biased toward low complexity; sequence SSASSSSVSP. Over residues 23-41 the composition is skewed to basic residues; the sequence is GHHHRLPPKRRAGRKKFRE. Positions 46–105 form a DNA-binding region, AP2/ERF; the sequence is VYRGVRARAGGSRWVCEVREPQAQARIWLGTYPTPEMAARAHDVAAIALRGERGAELNFP. Residues 134 to 161 are disordered; the sequence is RRPPPPLALPEDPQEGTSGGGATATSGR.

This sequence belongs to the AP2/ERF transcription factor family. ERF subfamily. Mostly expressed in developing seeds and apices.

The protein localises to the nucleus. In terms of biological role, transcriptional activator that binds specifically to the DNA sequence 5'-[AG]CCGAC-3'. Binding to the C-repeat/DRE element mediates high salinity- and dehydration-inducible transcription. This chain is Dehydration-responsive element-binding protein 1F (DREB1F), found in Oryza sativa subsp. indica (Rice).